A 183-amino-acid chain; its full sequence is Adenine phosphoribosyltransferase (183 aa).

The protein belongs to the purine/pyrimidine phosphoribosyltransferase family. In terms of assembly, homodimer.

It is found in the cytoplasm. The catalysed reaction is AMP + diphosphate = 5-phospho-alpha-D-ribose 1-diphosphate + adenine. It participates in purine metabolism; AMP biosynthesis via salvage pathway; AMP from adenine: step 1/1. In terms of biological role, catalyzes a salvage reaction resulting in the formation of AMP, that is energically less costly than de novo synthesis. This Photorhabdus laumondii subsp. laumondii (strain DSM 15139 / CIP 105565 / TT01) (Photorhabdus luminescens subsp. laumondii) protein is Adenine phosphoribosyltransferase.